Reading from the N-terminus, the 1472-residue chain is ABC multidrug transporter atrI (1472 aa).

The disordered stretch occupies residues 1–28 (MRRSNVVPVHSLTSSTNTGRDSRGEKYD). Residues 134 to 384 (FRRETWNFRN…FERQGWFCPP (251 aa)) enclose the ABC transporter 1 domain. N-linked (GlcNAc...) asparagine glycans are attached at residues asparagine 143, asparagine 277, asparagine 308, and asparagine 332. 7 consecutive transmembrane segments (helical) span residues 506–526 (ILAL…AGFY), 530–550 (ATLF…INSL), 580–600 (IPVK…LSGL), 605–625 (SQFF…SAVF), 639–659 (MTLA…VVPV), 664–684 (PWFK…ILIA), and 744–764 (FGIL…ATEL). A compositionally biased stretch (basic and acidic residues) spans 784 to 793 (AHLKNGHEPG). The segment at 784 to 821 (AHLKNGHEPGADEEAGAGKTVVSSSAEENKQDQGITSI) is disordered. Over residues 804–821 (VVSSSAEENKQDQGITSI) the composition is skewed to polar residues. In terms of domain architecture, ABC transporter 2 spans 828 to 1070 (FTWRDVVYDI…TLLKYFESHG (243 aa)). 864–871 (GVSGAGKT) lines the ATP pocket. 6 helical membrane-spanning segments follow: residues 1168 to 1188 (YIAA…FSFF), 1204 to 1224 (VFML…LFIT), 1244 to 1264 (FMIA…ILVF), 1282 to 1302 (LVLL…DFVI), 1309 to 1329 (ETAG…NGVM), and 1337 to 1357 (GFWI…GMAA). Asparagine 1402 is a glycosylation site (N-linked (GlcNAc...) asparagine). A helical membrane pass occupies residues 1433 to 1453 (FGIFWAYVVFDIAVAVMLYYC). N-linked (GlcNAc...) asparagine glycosylation is present at asparagine 1460.

This sequence belongs to the ABC transporter superfamily. ABCG family. PDR (TC 3.A.1.205) subfamily.

It localises to the cell membrane. The enzyme catalyses itraconazole(in) + ATP + H2O = itraconazole(out) + ADP + phosphate + H(+). It carries out the reaction voriconazole(in) + ATP + H2O = voriconazole(out) + ADP + phosphate + H(+). It catalyses the reaction fluconazole(in) + ATP + H2O = fluconazole(out) + ADP + phosphate + H(+). In terms of biological role, pleiotropic ABC efflux transporter involved in the basal level of azole susceptibility. Confers resistance to fluconazole, itraconazole and voriconazole. This Aspergillus fumigatus (strain ATCC MYA-4609 / CBS 101355 / FGSC A1100 / Af293) (Neosartorya fumigata) protein is ABC multidrug transporter atrI.